The chain runs to 186 residues: Large ribosomal subunit protein uL5 (186 aa).

Belongs to the universal ribosomal protein uL5 family. In terms of assembly, part of the 50S ribosomal subunit; part of the 5S rRNA/L5/L18/L25 subcomplex. Contacts the 5S rRNA and the P site tRNA. Forms a bridge to the 30S subunit in the 70S ribosome.

This is one of the proteins that bind and probably mediate the attachment of the 5S RNA into the large ribosomal subunit, where it forms part of the central protuberance. In the 70S ribosome it contacts protein S13 of the 30S subunit (bridge B1b), connecting the 2 subunits; this bridge is implicated in subunit movement. Contacts the P site tRNA; the 5S rRNA and some of its associated proteins might help stabilize positioning of ribosome-bound tRNAs. The sequence is that of Large ribosomal subunit protein uL5 from Phenylobacterium zucineum (strain HLK1).